The sequence spans 225 residues: Glycerol-3-phosphate acyltransferase (225 aa).

The next 6 membrane-spanning stretches (helical) occupy residues 1–21, 56–76, 95–115, 134–154, 159–178, and 182–201; these read MAIW…LGSF, GPGL…VALV, IGLW…LGHS, VLLV…ALVV, IVSL…MFVA, and LAYV…RHWA.

This sequence belongs to the PlsY family. Probably interacts with PlsX.

It is found in the cell inner membrane. The catalysed reaction is an acyl phosphate + sn-glycerol 3-phosphate = a 1-acyl-sn-glycero-3-phosphate + phosphate. The protein operates within lipid metabolism; phospholipid metabolism. Its function is as follows. Catalyzes the transfer of an acyl group from acyl-phosphate (acyl-PO(4)) to glycerol-3-phosphate (G3P) to form lysophosphatidic acid (LPA). This enzyme utilizes acyl-phosphate as fatty acyl donor, but not acyl-CoA or acyl-ACP. In Acaryochloris marina (strain MBIC 11017), this protein is Glycerol-3-phosphate acyltransferase.